The chain runs to 247 residues: Segregation and condensation protein A (247 aa).

This sequence belongs to the ScpA family. In terms of assembly, component of a cohesin-like complex composed of ScpA, ScpB and the Smc homodimer, in which ScpA and ScpB bind to the head domain of Smc. The presence of the three proteins is required for the association of the complex with DNA.

The protein resides in the cytoplasm. Its function is as follows. Participates in chromosomal partition during cell division. May act via the formation of a condensin-like complex containing Smc and ScpB that pull DNA away from mid-cell into both cell halves. This chain is Segregation and condensation protein A, found in Bacillus cereus (strain 03BB102).